Here is a 64-residue protein sequence, read N- to C-terminus: UPF0434 protein Oant_3286 (64 aa).

This sequence belongs to the UPF0434 family.

This Brucella anthropi (strain ATCC 49188 / DSM 6882 / CCUG 24695 / JCM 21032 / LMG 3331 / NBRC 15819 / NCTC 12168 / Alc 37) (Ochrobactrum anthropi) protein is UPF0434 protein Oant_3286.